Reading from the N-terminus, the 391-residue chain is ATP phosphoribosyltransferase regulatory subunit (391 aa).

It belongs to the class-II aminoacyl-tRNA synthetase family. HisZ subfamily. Heteromultimer composed of HisG and HisZ subunits.

The protein localises to the cytoplasm. Its pathway is amino-acid biosynthesis; L-histidine biosynthesis; L-histidine from 5-phospho-alpha-D-ribose 1-diphosphate: step 1/9. In terms of biological role, required for the first step of histidine biosynthesis. May allow the feedback regulation of ATP phosphoribosyltransferase activity by histidine. In Prochlorococcus marinus (strain NATL2A), this protein is ATP phosphoribosyltransferase regulatory subunit.